Consider the following 339-residue polypeptide: Anthranilate phosphoribosyltransferase (339 aa).

5-phospho-alpha-D-ribose 1-diphosphate-binding positions include glycine 81, 84–85, serine 89, 91–94, 109–117, and alanine 121; these read GD, NVSS, and KHGNRALSS. Residue glycine 81 coordinates anthranilate. Residue serine 93 coordinates Mg(2+). Asparagine 112 contacts anthranilate. Residue arginine 167 participates in anthranilate binding. Residues aspartate 225 and glutamate 226 each contribute to the Mg(2+) site.

This sequence belongs to the anthranilate phosphoribosyltransferase family. In terms of assembly, homodimer. Mg(2+) is required as a cofactor.

The catalysed reaction is N-(5-phospho-beta-D-ribosyl)anthranilate + diphosphate = 5-phospho-alpha-D-ribose 1-diphosphate + anthranilate. The protein operates within amino-acid biosynthesis; L-tryptophan biosynthesis; L-tryptophan from chorismate: step 2/5. In terms of biological role, catalyzes the transfer of the phosphoribosyl group of 5-phosphorylribose-1-pyrophosphate (PRPP) to anthranilate to yield N-(5'-phosphoribosyl)-anthranilate (PRA). In Brucella abortus (strain S19), this protein is Anthranilate phosphoribosyltransferase.